The chain runs to 359 residues: Histidinol-phosphate aminotransferase (359 aa).

N6-(pyridoxal phosphate)lysine is present on K217.

Belongs to the class-II pyridoxal-phosphate-dependent aminotransferase family. Histidinol-phosphate aminotransferase subfamily. As to quaternary structure, homodimer. It depends on pyridoxal 5'-phosphate as a cofactor.

It catalyses the reaction L-histidinol phosphate + 2-oxoglutarate = 3-(imidazol-4-yl)-2-oxopropyl phosphate + L-glutamate. The protein operates within amino-acid biosynthesis; L-histidine biosynthesis; L-histidine from 5-phospho-alpha-D-ribose 1-diphosphate: step 7/9. This chain is Histidinol-phosphate aminotransferase, found in Salmonella heidelberg (strain SL476).